Reading from the N-terminus, the 135-residue chain is MTTTPLGKMIQDGDFVFQKAKKGTTIPKARKKTLTKDLQVQVAKELEQESSSTFRFAYVFPRKAQNHYYSPSRTHTSSIKKKRPKLCSNINLTPWSLIDSTSNKSIREQSREMGIISIQKWAEQARMRSLCFPKN.

This is an uncharacterized protein from Schizosaccharomyces pombe (strain 972 / ATCC 24843) (Fission yeast).